The following is a 41-amino-acid chain: Photosystem I reaction center subunit VIII (41 aa).

The chain crosses the membrane as a helical span at residues 12–32 (WIMIPVTCWLFPVVVMGLLFI).

This sequence belongs to the PsaI family.

Its subcellular location is the cellular thylakoid membrane. In terms of biological role, may help in the organization of the PsaL subunit. The chain is Photosystem I reaction center subunit VIII from Cyanothece sp. (strain PCC 7425 / ATCC 29141).